Reading from the N-terminus, the 316-residue chain is M-phase inducer phosphatase cdc-25.3 (316 aa).

Residues 35–65 (QNRQHSSAISHISNSSPPTRKRSIDGGYTSG) form a disordered region. Positions 39-50 (HSSAISHISNSS) are enriched in low complexity. The Rhodanese domain occupies 136-242 (FMQKYILIDC…FYAFTRGLEK (107 aa)).

It belongs to the MPI phosphatase family.

It catalyses the reaction O-phospho-L-tyrosyl-[protein] + H2O = L-tyrosyl-[protein] + phosphate. The chain is M-phase inducer phosphatase cdc-25.3 (cdc-25.3) from Caenorhabditis elegans.